Reading from the N-terminus, the 236-residue chain is Orotidine 5'-phosphate decarboxylase (236 aa).

Residues Asp-14, Lys-36, 63 to 72, Thr-122, Arg-183, Gln-192, Gly-212, and Arg-213 each bind substrate; that span reads DLKYHDIPNT. Residue Lys-65 is the Proton donor of the active site.

Belongs to the OMP decarboxylase family. Type 1 subfamily. Homodimer.

It catalyses the reaction orotidine 5'-phosphate + H(+) = UMP + CO2. It participates in pyrimidine metabolism; UMP biosynthesis via de novo pathway; UMP from orotate: step 2/2. Functionally, catalyzes the decarboxylation of orotidine 5'-monophosphate (OMP) to uridine 5'-monophosphate (UMP). This Halorhodospira halophila (strain DSM 244 / SL1) (Ectothiorhodospira halophila (strain DSM 244 / SL1)) protein is Orotidine 5'-phosphate decarboxylase.